The sequence spans 466 residues: Sucrose-6-phosphate hydrolase (466 aa).

Substrate is bound by residues 38–41 (LMND), Gln-57, 100–101 (YS), 159–160 (RD), and Glu-218. Asp-41 is an active-site residue.

It belongs to the glycosyl hydrolase 32 family.

Its subcellular location is the cytoplasm. It carries out the reaction Hydrolysis of terminal non-reducing beta-D-fructofuranoside residues in beta-D-fructofuranosides.. It participates in glycan biosynthesis; sucrose metabolism. Enables the bacterium to metabolize sucrose as a sole carbon source. This chain is Sucrose-6-phosphate hydrolase (scrB), found in Salmonella typhimurium.